The chain runs to 241 residues: MATVSMRDMLKAGVHFGHQTRYWNPKMKPFIFGARNKVHIINLENTVPMFNDALAELGKIASRKGKILFVGTKRAASEAVKDSANNCDQFFVNHRWLGGMLTNWKTVRQSIKRLKDLEIQSQDGTFDKLTKKEALMRTRELDKLEKSLGGIKDMGGLPDALFVIDADHEHIAIKEANNLGIPVFAVVDTNSDPDGVDFIIPGNDDAIRAINLYLGAVATAVREGRSQDLAVQAEEGLVEAE.

The protein belongs to the universal ribosomal protein uS2 family.

The sequence is that of Small ribosomal subunit protein uS2 from Pectobacterium atrosepticum (strain SCRI 1043 / ATCC BAA-672) (Erwinia carotovora subsp. atroseptica).